The following is a 574-amino-acid chain: MSSGIILLLVAIVLLVIIAYVVGVVIRKRNDTLIANLETRKQELVDLPVQEEIEQVKLLHLIGQSQSTFREWNQKWTDLSTNSFKDIDFHLVEAENLNDSFNFVRAKHEIDNVDSQLTIIEEDIVSIREALEVLKEQEEKNSARVTHALDLYETLQKSISEKEDNYGTTMPEIEKQLKNIEAEFSHFVTLNSTGDPIEASEVLNKAEEHTIALGQITEQIPAIVAKLEDDFPDQLDDLETGYRRLLEENYHFPEKDIEQRFQEVREAIRSNSDGLVSLDLDRARDENEHIQEKIDKLYDIFEREIAAYKVAHKDSKIIPQFLAHAKSNNEQLGHEIKRLSAKYILNENESLSLRSFTNDLEEIETKVLPSVENFGQEASPYTHLQILFERTLKTLTTVEENQMEVFEAVKTIESVETRARQNMDKYVNKLHMIKRFMEKRNLPGIPQDFLSTFFTTSSQIEALINELSRGRIDIEAVSRLNDVTTNAIANLEQATYLVVQDATLTEQLLQYSNRYRSFEQNVQKSFEQALYLFEVEHNYKASFDEISYALETVEPGVTDRFVTSYEKTQERIRF.

Over 1–7 the chain is Extracellular; that stretch reads MSSGIIL. The chain crosses the membrane as a helical span at residues 8–26; sequence LLVAIVLLVIIAYVVGVVI. The Cytoplasmic portion of the chain corresponds to 27–574; that stretch reads RKRNDTLIAN…YEKTQERIRF (548 aa). 3 coiled-coil regions span residues 104–141, 275–343, and 473–525; these read VRAK…EEKN, LVSL…SAKY, and DIEA…VQKS.

Belongs to the EzrA family.

The protein localises to the cell membrane. Functionally, negative regulator of FtsZ ring formation; modulates the frequency and position of FtsZ ring formation. Inhibits FtsZ ring formation at polar sites. Interacts either with FtsZ or with one of its binding partners to promote depolymerization. The sequence is that of Septation ring formation regulator EzrA from Streptococcus agalactiae serotype III (strain NEM316).